Consider the following 357-residue polypeptide: Cinnamyl alcohol dehydrogenase 1 (357 aa).

Zn(2+) is bound at residue Cys-47. Thr-49 is a binding site for NADP(+). Residues His-69, Glu-70, Cys-100, Cys-103, Cys-106, Cys-114, and Cys-163 each coordinate Zn(2+). NADP(+) contacts are provided by residues Thr-167, 188–193 (GLGGVG), 211–216 (SSSDKK), Thr-251, Gly-275, and 298–300 (SFI).

Belongs to the zinc-containing alcohol dehydrogenase family. Homodimer. Zn(2+) serves as cofactor. Expressed in leaves, mainly in peltate glands.

It catalyses the reaction (E)-cinnamyl alcohol + NADP(+) = (E)-cinnamaldehyde + NADPH + H(+). The enzyme catalyses (E)-coniferol + NADP(+) = (E)-coniferaldehyde + NADPH + H(+). It carries out the reaction (E)-sinapyl alcohol + NADP(+) = (E)-sinapaldehyde + NADPH + H(+). The catalysed reaction is (E)-4-coumaroyl alcohol + NADP(+) = (E)-4-coumaraldehyde + NADPH + H(+). It catalyses the reaction (E)-caffeyl alcohol + NADP(+) = (E)-caffeyl aldehyde + NADPH + H(+). The protein operates within aromatic compound metabolism; phenylpropanoid biosynthesis. With respect to regulation, 60% inhibition by 5 mM Ca(+), Mg(+) or Cu(+). Involved in the production of citral, a mixture of geranial and neral with a strong lemony scent. Reversibly oxidizes geraniol to produce geranial at half the efficiency compared with its activity with cinnamyl alcohol. Does not use nerol and neral as substrates. This Ocimum basilicum (Sweet basil) protein is Cinnamyl alcohol dehydrogenase 1 (CAD1).